The primary structure comprises 137 residues: Cell division protein SepF (137 aa).

The protein belongs to the SepF family. As to quaternary structure, homodimer. Interacts with FtsZ.

The protein resides in the cytoplasm. Its function is as follows. Cell division protein that is part of the divisome complex and is recruited early to the Z-ring. Probably stimulates Z-ring formation, perhaps through the cross-linking of FtsZ protofilaments. Its function overlaps with FtsA. The sequence is that of Cell division protein SepF from Thermoanaerobacter pseudethanolicus (strain ATCC 33223 / 39E) (Clostridium thermohydrosulfuricum).